The sequence spans 146 residues: Angiogenin (146 aa).

A signal peptide spans 1–24 (MVMGLGLFLLVFMLGLGLTPPTLA). Gln25 carries the pyrrolidone carboxylic acid modification. Residue His37 is the Proton acceptor of the active site. Residue Arg45 participates in tRNA binding. Intrachain disulfides connect Cys50/Cys105, Cys63/Cys116, and Cys81/Cys131. The Nucleolar localization signal signature appears at 55–59 (RRRHL). Residues Cys105 and Ile127 each coordinate tRNA. The Proton donor role is filled by His138.

The protein belongs to the pancreatic ribonuclease family. Homodimer. Interacts with RNH1; inhibiting ANG ribonuclease activity. Interacts with PCNA.

The protein localises to the secreted. It localises to the nucleus. The protein resides in the nucleolus. Its subcellular location is the cytoplasm. It is found in the stress granule. Its activity is regulated as follows. Has weak tRNA ribonuclease activity by itself due to partial autoinhibition by its C-terminus, which folds into a short alpha-helix that partially occludes the substrate-binding site. In absence of stress, the ribonuclease activity is inhibited by RNH1 in the cytoplasm. In response to stress, dissociates from RNH1 in the cytoplasm and associates with cytoplasmic ribosomes with vacant A-sites: ribosomes directly activate the tRNA ribonuclease activity of ANG by refolding the C-terminal alpha-helix. In response to stress, the angiogenic activity of ANG is inhibited by RNH1 in the nucleus. Secreted ribonuclease that can either promote or restrict cell proliferation of target cells, depending on the context. Endocytosed in target cells via its receptor PLXNB2 and translocates to the cytoplasm or nucleus. Under stress conditions, localizes to the cytoplasm and promotes the assembly of stress granules (SGs): specifically cleaves a subset of tRNAs within anticodon loops to produce tRNA-derived stress-induced fragments (tiRNAs), resulting in translation repression and inhibition of cell proliferation. tiRNas also prevent formation of apoptosome, thereby promoting cell survival. Preferentially cleaves RNAs between a pyrimidine and an adenosine residue, suggesting that it cleaves the anticodon loop of tRNA(Ala) (32-UUAGCAU-38) after positions 33 and 36. Cleaves a subset of tRNAs, including tRNA(Ala), tRNA(Glu), tRNA(Gly), tRNA(Lys), tRNA(Val), tRNA(His), tRNA(Asp) and tRNA(Sec). Under growth conditions and in differentiated cells, translocates to the nucleus and stimulates ribosomal RNA (rRNA) transcription, including that containing the initiation site sequences of 45S rRNA, thereby promoting cell growth and proliferation. Angiogenin induces vascularization of normal and malignant tissues via its ability to promote rRNA transcription. Involved in hematopoietic stem and progenitor cell (HSPC) growth and survival by promoting rRNA transcription in growth conditions and inhibiting translation in response to stress, respectively. Mediates the crosstalk between myeloid and intestinal epithelial cells to protect the intestinal epithelial barrier integrity: secreted by myeloid cells and promotes intestinal epithelial cells proliferation and survival. Also mediates osteoclast-endothelial cell crosstalk in growing bone: produced by osteoclasts and protects the neighboring vascular cells against senescence by promoting rRNA transcription. The polypeptide is Angiogenin (ANG) (Macaca mulatta (Rhesus macaque)).